The sequence spans 615 residues: Zinc metalloproteinase R519 (615 aa).

A Peptidase M13 domain is found at 1-611 (MTYRSCIPQN…LDPQLRSRIL (611 aa)). His454 serves as a coordination point for Zn(2+). Glu455 is a catalytic residue. The Zn(2+) site is built by His458 and Glu513. Asp517 functions as the Proton donor in the catalytic mechanism.

The protein belongs to the peptidase M13 family. Requires Zn(2+) as cofactor.

Zinc metalloprotease. In Acanthamoeba polyphaga (Amoeba), this protein is Zinc metalloproteinase R519.